The chain runs to 383 residues: Hydroxymethylglutaryl-CoA synthase (383 aa).

D29 is a binding site for (3S)-3-hydroxy-3-methylglutaryl-CoA. E79 serves as the catalytic Proton donor/acceptor. (3S)-3-hydroxy-3-methylglutaryl-CoA-binding residues include C111, T152, S201, H233, K242, N275, and S308. Residue C111 is the Acyl-thioester intermediate of the active site. Catalysis depends on H233, which acts as the Proton donor/acceptor.

Belongs to the thiolase-like superfamily. HMG-CoA synthase family. In terms of assembly, homodimer.

The enzyme catalyses acetoacetyl-CoA + acetyl-CoA + H2O = (3S)-3-hydroxy-3-methylglutaryl-CoA + CoA + H(+). It functions in the pathway metabolic intermediate biosynthesis; (R)-mevalonate biosynthesis; (R)-mevalonate from acetyl-CoA: step 2/3. With respect to regulation, is sensitive to feedback substrate inhibition by acetoacetyl-CoA. Is inactivated by hymeglusin, which also blocks the growth of E.faecalis, indicating the critical role that the mevalonate pathway plays in isoprenoid biosynthesis. Catalyzes the condensation of acetyl-CoA with acetoacetyl-CoA to form 3-hydroxy-3-methylglutaryl-CoA (HMG-CoA). Functions in the mevalonate (MVA) pathway leading to isopentenyl diphosphate (IPP), a key precursor for the biosynthesis of isoprenoid compounds. This chain is Hydroxymethylglutaryl-CoA synthase (mvaS), found in Enterococcus faecalis (Streptococcus faecalis).